We begin with the raw amino-acid sequence, 379 residues long: Leukocyte elastase inhibitor A (379 aa).

Ser-300 bears the Phosphoserine mark.

This sequence belongs to the serpin family. Ov-serpin subfamily. As to quaternary structure, monomer.

Its subcellular location is the secreted. The protein localises to the cytoplasm. The protein resides in the cytolytic granule. It is found in the early endosome. In terms of biological role, regulates the activity of the neutrophil proteases. The sequence is that of Leukocyte elastase inhibitor A (Serpinb1a) from Rattus norvegicus (Rat).